The following is a 97-amino-acid chain: Putative pterin-4-alpha-carbinolamine dehydratase (97 aa).

This sequence belongs to the pterin-4-alpha-carbinolamine dehydratase family.

The enzyme catalyses (4aS,6R)-4a-hydroxy-L-erythro-5,6,7,8-tetrahydrobiopterin = (6R)-L-erythro-6,7-dihydrobiopterin + H2O. In Saccharolobus solfataricus (strain ATCC 35092 / DSM 1617 / JCM 11322 / P2) (Sulfolobus solfataricus), this protein is Putative pterin-4-alpha-carbinolamine dehydratase.